The primary structure comprises 264 residues: Late embryogenesis abundant protein D-34 (264 aa).

The span at M1–G16 shows a compositional bias: low complexity. A disordered region spans residues M1–K23. SMP domains lie at I22 to Q76, I138 to A194, and I203 to N261.

This sequence belongs to the LEA type SMP family.

LEA proteins are late embryonic proteins abundant in higher plant seed embryos. There are two subsets of LEA proteins (5a and 5b), the first ones are expressed when the cotyledon weight reach 80 mg and the second set are expressed above 100 mg. The function of those proteins is not known. The sequence is that of Late embryogenesis abundant protein D-34 from Gossypium hirsutum (Upland cotton).